Reading from the N-terminus, the 250-residue chain is Large ribosomal subunit protein uL30B (250 aa).

The protein belongs to the universal ribosomal protein uL30 family. As to quaternary structure, component of the large ribosomal subunit (LSU). Mature yeast ribosomes consist of a small (40S) and a large (60S) subunit. The 40S small subunit contains 1 molecule of ribosomal RNA (18S rRNA) and at least 33 different proteins. The large 60S subunit contains 3 rRNA molecules (25S, 5.8S and 5S rRNA) and at least 46 different proteins.

It is found in the cytoplasm. Its subcellular location is the nucleus. The protein resides in the nucleolus. Component of the ribosome, a large ribonucleoprotein complex responsible for the synthesis of proteins in the cell. The small ribosomal subunit (SSU) binds messenger RNAs (mRNAs) and translates the encoded message by selecting cognate aminoacyl-transfer RNA (tRNA) molecules. The large subunit (LSU) contains the ribosomal catalytic site termed the peptidyl transferase center (PTC), which catalyzes the formation of peptide bonds, thereby polymerizing the amino acids delivered by tRNAs into a polypeptide chain. The nascent polypeptides leave the ribosome through a tunnel in the LSU and interact with protein factors that function in enzymatic processing, targeting, and the membrane insertion of nascent chains at the exit of the ribosomal tunnel. This is Large ribosomal subunit protein uL30B (rpl702) from Schizosaccharomyces pombe (strain 972 / ATCC 24843) (Fission yeast).